A 224-amino-acid chain; its full sequence is 7-cyano-7-deazaguanine synthase (224 aa).

Residue 9 to 19 participates in ATP binding; the sequence is LSGGLDSATVL. The Zn(2+) site is built by cysteine 189, cysteine 199, cysteine 202, and cysteine 205.

It belongs to the QueC family. Zn(2+) is required as a cofactor.

It carries out the reaction 7-carboxy-7-deazaguanine + NH4(+) + ATP = 7-cyano-7-deazaguanine + ADP + phosphate + H2O + H(+). Its pathway is purine metabolism; 7-cyano-7-deazaguanine biosynthesis. Catalyzes the ATP-dependent conversion of 7-carboxy-7-deazaguanine (CDG) to 7-cyano-7-deazaguanine (preQ(0)). The chain is 7-cyano-7-deazaguanine synthase from Ralstonia pickettii (strain 12J).